Here is a 106-residue protein sequence, read N- to C-terminus: Putative toxin Rv3098A/RVBD_3098A (106 aa).

Belongs to the PemK/MazF family. In terms of assembly, forms a complex with cognate antitoxin Rv3098B/RVBD_3098B.

Putative toxic component of a possible type II toxin-antitoxin (TA) system. Its toxic effect may be neutralized by cognate antitoxin Rv3098B/RVBD_3098B. This chain is Putative toxin Rv3098A/RVBD_3098A, found in Mycobacterium tuberculosis (strain ATCC 25618 / H37Rv).